The chain runs to 594 residues: Neuronal PAS domain-containing protein 1 (594 aa).

Residues 45–98 (QRKEKSRNAARWRRGKENLEFFELAKLLPLPGAISSQLDKASIVRLSVTYLRLR) form the bHLH domain. The PAS 1 domain occupies 135–205 (EQHLGGHILQ…EQLGLRAASI (71 aa)). The disordered stretch occupies residues 206-237 (GPPTPPSVSSSSSSSSSSLVDTPEIEASPTEA). The segment covering 212–223 (SVSSSSSSSSSS) has biased composition (low complexity). A PAS 2 domain is found at 294–360 (APLAELPLHG…IRQSHLDLLD (67 aa)). Residues 366–409 (TGYYRWLQRAGGFVWLQSVATVAGNGKSTGEHHVLWVSHVLSNA) enclose the PAC domain. Positions 427–498 (QEEPSRPGPE…DPPAPPRPEF (72 aa)) are disordered. Basic and acidic residues predominate over residues 453-480 (DQDKDKDPQARGKRIKVEASPKEARGSE).

Efficient DNA binding requires dimerization with another bHLH protein. Interacts with ARNT; forms a heterodimer that binds core DNA sequence 5'-[AG]CGTG-3' within the hypoxia response element (HRE) leading to a transcriptional repressor on its target gene TH. Expressed in brain in inhibitory interneurons. Also found in spinal cord.

The protein resides in the nucleus. May control regulatory pathways relevant to schizophrenia and to psychotic illness. May play a role in late central nervous system development by modulating EPO expression in response to cellular oxygen level. Forms a heterodimer that binds core DNA sequence 5'-TACGTG-3' within the hypoxia response element (HRE) leading to transcriptional repression on its target gene TH. The sequence is that of Neuronal PAS domain-containing protein 1 (Npas1) from Mus musculus (Mouse).